We begin with the raw amino-acid sequence, 156 residues long: Ribonuclease H (156 aa).

Residues 7-148 (QDKIVMIATD…ADQLASDAAI (142 aa)) form the RNase H type-1 domain. Asp16, Glu54, Asp76, and Asp140 together coordinate Mg(2+).

It belongs to the RNase H family. Monomer. Mg(2+) is required as a cofactor.

It is found in the cytoplasm. It catalyses the reaction Endonucleolytic cleavage to 5'-phosphomonoester.. Its function is as follows. Endonuclease that specifically degrades the RNA of RNA-DNA hybrids. This chain is Ribonuclease H (rnhA), found in Zymomonas mobilis subsp. mobilis (strain ATCC 31821 / ZM4 / CP4).